The primary structure comprises 291 residues: Putative GATA transcription factor 13 (291 aa).

A GATA-type zinc finger spans residues 187 to 241 (KSRRLKCTHCETTTTPQWREGPNGRKTLCNACGIRFRSGRLVLEYRPAASPTFIP). Positions 271–291 (TSGPETRSRLRNFGRPMSYGQ) are disordered.

Belongs to the type IV zinc-finger family. Class A subfamily.

It is found in the nucleus. Transcriptional activator that specifically binds 5'-GATA-3' or 5'-GAT-3' motifs within gene promoters. May be involved in the regulation of some light-responsive genes. The chain is Putative GATA transcription factor 13 (GATA13) from Arabidopsis thaliana (Mouse-ear cress).